Consider the following 139-residue polypeptide: D-ribose pyranase (139 aa).

Residue histidine 20 is the Proton donor of the active site. Substrate is bound by residues aspartate 28, histidine 106, and 128–130 (YAN).

The protein belongs to the RbsD / FucU family. RbsD subfamily. As to quaternary structure, homodecamer.

The protein resides in the cytoplasm. The catalysed reaction is beta-D-ribopyranose = beta-D-ribofuranose. It participates in carbohydrate metabolism; D-ribose degradation; D-ribose 5-phosphate from beta-D-ribopyranose: step 1/2. In terms of biological role, catalyzes the interconversion of beta-pyran and beta-furan forms of D-ribose. The polypeptide is D-ribose pyranase (Serratia proteamaculans (strain 568)).